Consider the following 162-residue polypeptide: Caveolin-2 (162 aa).

Residues 1–86 are Cytoplasmic-facing; it reads MGLETEKADV…FEISKYVLYK (86 aa). The residue at position 19 (Y19) is a Phosphotyrosine; by SRC. Residues S20 and S23 each carry the phosphoserine modification. Residues 87–107 constitute an intramembrane region (helical); it reads FLTVFLAIPLAFAAGVLFAVL. At 108 to 162 the chain is on the cytoplasmic side; it reads SCLHIWILMPFVKTCLMVLPSVQTIWRSVTDVVIAPLCASIGRSFSSVGLQLSHD.

The protein belongs to the caveolin family. As to quaternary structure, monomer or homodimer. Interacts with CAV1; the interaction forms a stable heterooligomeric complex that is required for targeting to lipid rafts and for caveolae formation. Tyrosine phosphorylated forms do not form heterooligomers with the Tyr-19-phosphorylated form existing as a monomer or dimer. Interacts (tyrosine phosphorylated form) with the SH2 domain-containing proteins, RASA1, NCK1 and SRC. Interacts (tyrosine phosphorylated form) with INSR. Interacts (Tyr-19 phosphorylated form) with MAPK1 (phosphorylated form); the interaction, promoted by insulin, leads to nuclear location and MAPK1 activation. Interacts with STAT3; the interaction is increased on insulin-induced tyrosine phosphorylation leading to STAT activation. In terms of processing, phosphorylated on serine and tyrosine residues. CAV1 promotes phosphorylation on Ser-23 which then targets the complex to the plasma membrane, lipid rafts and caveolae. Phosphorylation on Tyr-19 is required for insulin-induced phosphorylation of MAPK1 and DNA binding of STAT3. Tyrosine phosphorylation is induced by both EGF and insulin.

The protein resides in the nucleus. It is found in the cytoplasm. Its subcellular location is the golgi apparatus membrane. The protein localises to the cell membrane. It localises to the membrane. The protein resides in the caveola. May act as a scaffolding protein within caveolar membranes. Interacts directly with G-protein alpha subunits and can functionally regulate their activity. Acts as an accessory protein in conjunction with CAV1 in targeting to lipid rafts and driving caveolae formation. Positive regulator of cellular mitogenesis of the MAPK signaling pathway. Required for the insulin-stimulated nuclear translocation and activation of MAPK1 and STAT3, and the subsequent regulation of cell cycle progression. This chain is Caveolin-2 (CAV2), found in Oryctolagus cuniculus (Rabbit).